A 637-amino-acid polypeptide reads, in one-letter code: ATP-dependent RNA helicase DBP6 (637 aa).

The interval 1–93 (MFAVRFDPSQ…AASDHPDKHN (93 aa)) is disordered. Residues 33–84 (DEEDESSEEETESSEDEEEKEKEEVADEDSMDVDDESSGDDDEEAEEGEVDA) show a composition bias toward acidic residues. The short motif at 198–206 (TFPIQSILL) is the Q motif element. The 181-residue stretch at 222-402 (KNFTRRVGDV…GLQFYNPKLF (181 aa)) folds into the Helicase ATP-binding domain. Residue 235–242 (ASTGSGKT) coordinates ATP. A DEAD box motif is present at residues 342–345 (DEAD). The Helicase C-terminal domain maps to 434-608 (FLLRLLSEIN…EGQEEEAQVL (175 aa)).

This sequence belongs to the DEAD box helicase family. DDX51/DBP6 subfamily. As to quaternary structure, associated with pre-ribosomal particles.

Its subcellular location is the nucleus. The protein resides in the nucleolus. It carries out the reaction ATP + H2O = ADP + phosphate + H(+). In terms of biological role, ATP-binding RNA helicase involved in the biogenesis of 60S ribosomal subunits and is required for the normal formation of 25S and 5.8S rRNAs. This is ATP-dependent RNA helicase DBP6 (DBP6) from Vanderwaltozyma polyspora (strain ATCC 22028 / DSM 70294 / BCRC 21397 / CBS 2163 / NBRC 10782 / NRRL Y-8283 / UCD 57-17) (Kluyveromyces polysporus).